The primary structure comprises 201 residues: Large ribosomal subunit protein uL4 (201 aa).

Positions 44–71 (RAQKTRAEVSGSGKKPWRQKGTGRARSG) are disordered.

The protein belongs to the universal ribosomal protein uL4 family. Part of the 50S ribosomal subunit.

In terms of biological role, one of the primary rRNA binding proteins, this protein initially binds near the 5'-end of the 23S rRNA. It is important during the early stages of 50S assembly. It makes multiple contacts with different domains of the 23S rRNA in the assembled 50S subunit and ribosome. Its function is as follows. Forms part of the polypeptide exit tunnel. This is Large ribosomal subunit protein uL4 from Actinobacillus succinogenes (strain ATCC 55618 / DSM 22257 / CCUG 43843 / 130Z).